A 124-amino-acid chain; its full sequence is UPF0231 protein Sputcn32_0682 (124 aa).

This sequence belongs to the UPF0231 family.

In Shewanella putrefaciens (strain CN-32 / ATCC BAA-453), this protein is UPF0231 protein Sputcn32_0682.